The chain runs to 275 residues: Putative rhamnulose-1-phosphate aldolase (275 aa).

The active site involves glutamate 117. Positions 141, 143, and 212 each coordinate Zn(2+).

It belongs to the aldolase class II family. RhaD subfamily. In terms of assembly, homotetramer. It depends on Zn(2+) as a cofactor.

It is found in the cytoplasm. It catalyses the reaction L-rhamnulose 1-phosphate = (S)-lactaldehyde + dihydroxyacetone phosphate. It participates in carbohydrate degradation; L-rhamnose degradation; glycerone phosphate from L-rhamnose: step 3/3. Its function is as follows. Catalyzes the reversible cleavage of L-rhamnulose-1-phosphate to dihydroxyacetone phosphate (DHAP) and L-lactaldehyde. This is Putative rhamnulose-1-phosphate aldolase from Salmonella typhi.